Consider the following 354-residue polypeptide: Putative Xaa-Pro aminopeptidase (354 aa).

Mn(2+) contacts are provided by Asp-213, Asp-224, His-290, Glu-319, and Glu-333.

The protein belongs to the peptidase M24B family. Mn(2+) is required as a cofactor.

The enzyme catalyses Release of any N-terminal amino acid, including proline, that is linked to proline, even from a dipeptide or tripeptide.. The polypeptide is Putative Xaa-Pro aminopeptidase (pepP) (Mycoplasma pneumoniae (strain ATCC 29342 / M129 / Subtype 1) (Mycoplasmoides pneumoniae)).